Consider the following 161-residue polypeptide: ATP synthase subunit b (161 aa).

The helical transmembrane segment at 1 to 21 threads the bilayer; the sequence is MYLNATILGQVIAFILFVWFC.

This sequence belongs to the ATPase B chain family. F-type ATPases have 2 components, F(1) - the catalytic core - and F(0) - the membrane proton channel. F(1) has five subunits: alpha(3), beta(3), gamma(1), delta(1), epsilon(1). F(0) has three main subunits: a(1), b(2) and c(10-14). The alpha and beta chains form an alternating ring which encloses part of the gamma chain. F(1) is attached to F(0) by a central stalk formed by the gamma and epsilon chains, while a peripheral stalk is formed by the delta and b chains.

The protein localises to the cell inner membrane. F(1)F(0) ATP synthase produces ATP from ADP in the presence of a proton or sodium gradient. F-type ATPases consist of two structural domains, F(1) containing the extramembraneous catalytic core and F(0) containing the membrane proton channel, linked together by a central stalk and a peripheral stalk. During catalysis, ATP synthesis in the catalytic domain of F(1) is coupled via a rotary mechanism of the central stalk subunits to proton translocation. Its function is as follows. Component of the F(0) channel, it forms part of the peripheral stalk, linking F(1) to F(0). This is ATP synthase subunit b from Blochmanniella floridana.